A 252-amino-acid polypeptide reads, in one-letter code: Imidazole glycerol phosphate synthase subunit HisF (252 aa).

Active-site residues include Asp-11 and Asp-130.

The protein belongs to the HisA/HisF family. In terms of assembly, heterodimer of HisH and HisF.

The protein resides in the cytoplasm. It catalyses the reaction 5-[(5-phospho-1-deoxy-D-ribulos-1-ylimino)methylamino]-1-(5-phospho-beta-D-ribosyl)imidazole-4-carboxamide + L-glutamine = D-erythro-1-(imidazol-4-yl)glycerol 3-phosphate + 5-amino-1-(5-phospho-beta-D-ribosyl)imidazole-4-carboxamide + L-glutamate + H(+). It participates in amino-acid biosynthesis; L-histidine biosynthesis; L-histidine from 5-phospho-alpha-D-ribose 1-diphosphate: step 5/9. Functionally, IGPS catalyzes the conversion of PRFAR and glutamine to IGP, AICAR and glutamate. The HisF subunit catalyzes the cyclization activity that produces IGP and AICAR from PRFAR using the ammonia provided by the HisH subunit. The polypeptide is Imidazole glycerol phosphate synthase subunit HisF (Dictyoglomus turgidum (strain DSM 6724 / Z-1310)).